The following is a 786-amino-acid chain: Endonuclease MutS2 (786 aa).

ATP is bound at residue G333–T340. The Smr domain maps to L711–K786.

Belongs to the DNA mismatch repair MutS family. MutS2 subfamily. In terms of assembly, homodimer. Binds to stalled ribosomes, contacting rRNA.

Functionally, endonuclease that is involved in the suppression of homologous recombination and thus may have a key role in the control of bacterial genetic diversity. Its function is as follows. Acts as a ribosome collision sensor, splitting the ribosome into its 2 subunits. Detects stalled/collided 70S ribosomes which it binds and splits by an ATP-hydrolysis driven conformational change. Acts upstream of the ribosome quality control system (RQC), a ribosome-associated complex that mediates the extraction of incompletely synthesized nascent chains from stalled ribosomes and their subsequent degradation. Probably generates substrates for RQC. This Lacticaseibacillus paracasei (strain ATCC 334 / BCRC 17002 / CCUG 31169 / CIP 107868 / KCTC 3260 / NRRL B-441) (Lactobacillus paracasei) protein is Endonuclease MutS2.